The sequence spans 681 residues: DNA-directed RNA polymerase subunit beta' (681 aa).

The Zn(2+) site is built by Cys-69, Cys-71, Cys-87, and Cys-90. 3 residues coordinate Mg(2+): Asp-489, Asp-491, and Asp-493.

This sequence belongs to the RNA polymerase beta' chain family. RpoC1 subfamily. In plastids the minimal PEP RNA polymerase catalytic core is composed of four subunits: alpha, beta, beta', and beta''. When a (nuclear-encoded) sigma factor is associated with the core the holoenzyme is formed, which can initiate transcription. Mg(2+) is required as a cofactor. Requires Zn(2+) as cofactor.

It localises to the plastid. Its subcellular location is the chloroplast. It catalyses the reaction RNA(n) + a ribonucleoside 5'-triphosphate = RNA(n+1) + diphosphate. Its function is as follows. DNA-dependent RNA polymerase catalyzes the transcription of DNA into RNA using the four ribonucleoside triphosphates as substrates. This is DNA-directed RNA polymerase subunit beta' from Solanum bulbocastanum (Wild potato).